Here is a 354-residue protein sequence, read N- to C-terminus: Sulfate/thiosulfate import ATP-binding protein CysA (354 aa).

The 235-residue stretch at 3–237 (IEVRGLSKRF…PATPFVYGFL (235 aa)) folds into the ABC transporter domain. 35–42 (GPSGCGKT) lines the ATP pocket.

Belongs to the ABC transporter superfamily. Sulfate/tungstate importer (TC 3.A.1.6) family. As to quaternary structure, the complex is composed of two ATP-binding proteins (CysA), two transmembrane proteins (CysT and CysW) and a solute-binding protein (CysP).

The protein resides in the cell inner membrane. It catalyses the reaction sulfate(out) + ATP + H2O = sulfate(in) + ADP + phosphate + H(+). The enzyme catalyses thiosulfate(out) + ATP + H2O = thiosulfate(in) + ADP + phosphate + H(+). Functionally, part of the ABC transporter complex CysAWTP involved in sulfate/thiosulfate import. Responsible for energy coupling to the transport system. This chain is Sulfate/thiosulfate import ATP-binding protein CysA, found in Bordetella parapertussis (strain 12822 / ATCC BAA-587 / NCTC 13253).